The chain runs to 372 residues: MAAVKRIVVLPGDHIGREVVEEAVKVLGAVEQSLSDVHFDFQYHLVGGAAIDATGSALPDEALGAAKEADAVLLGAVGGPKWQGGAVRPEQGLLKLRQELGVYANLRPCNFAADSLLELSPLRPEIARDTDIMVVRELLGGSYFGERHEDEGDGVAWDTDKYTVKEVQRIARMAGFLALQHDPPLPVWSLDKANVLASSRLWRKTVEETFQSEFPNVQLQHQLIDSAAMILVKNPRAFNGVVVTSNMFGDIISDEASVIPGSLGLLPSASLASLPDSKSAFGLYEPCHGSAPDLPAGKANPIGCILSAAMMLKLSLNMVAAGEAVEQAVQEVLDSGVRTGDLLGSSSTSEVGDAIALAVKEALRRQSAAGLS.

79-90 provides a ligand contact to NAD(+); the sequence is GPKWQGGAVRPE. Substrate contacts are provided by Arg-97, Arg-107, Arg-136, and Asp-225. Asp-225, Asp-250, and Asp-254 together coordinate Mg(2+). 289 to 300 lines the NAD(+) pocket; that stretch reads GSAPDLPAGKAN.

This sequence belongs to the isocitrate and isopropylmalate dehydrogenases family. Homodimer. It depends on Mg(2+) as a cofactor. Mn(2+) is required as a cofactor.

It is found in the cytoplasm. It catalyses the reaction (2R,3S)-3-isopropylmalate + NAD(+) = 4-methyl-2-oxopentanoate + CO2 + NADH. Its pathway is amino-acid biosynthesis; L-leucine biosynthesis; L-leucine from 3-methyl-2-oxobutanoate: step 3/4. Its function is as follows. Catalyzes the oxidation of 3-carboxy-2-hydroxy-4-methylpentanoate (3-isopropylmalate) to 3-carboxy-4-methyl-2-oxopentanoate. The product decarboxylates to 4-methyl-2 oxopentanoate. This is 3-isopropylmalate dehydrogenase (LEU2) from Eremothecium gossypii (strain ATCC 10895 / CBS 109.51 / FGSC 9923 / NRRL Y-1056) (Yeast).